The sequence spans 172 residues: Translation initiation factor IF-3 (172 aa).

The protein belongs to the IF-3 family. Monomer.

The protein localises to the cytoplasm. In terms of biological role, IF-3 binds to the 30S ribosomal subunit and shifts the equilibrium between 70S ribosomes and their 50S and 30S subunits in favor of the free subunits, thus enhancing the availability of 30S subunits on which protein synthesis initiation begins. The protein is Translation initiation factor IF-3 of Campylobacter jejuni subsp. doylei (strain ATCC BAA-1458 / RM4099 / 269.97).